A 586-amino-acid polypeptide reads, in one-letter code: Inner membrane protein YejM (586 aa).

Residues 1–20 lie on the Cytoplasmic side of the membrane; sequence MVTHRQRYREKVSQMVSWGH. Residues 21–43 traverse the membrane as a helical segment; it reads WFALFNILLATLLGSRYLFVADW. Topologically, residues 44 to 57 are periplasmic; the sequence is PTTLAGRIYSYLSI. Residues 58 to 80 traverse the membrane as a helical segment; that stretch reads VGHFSFLVFATYLLILFPLTFIV. The Cytoplasmic portion of the chain corresponds to 81–84; the sequence is MSQR. The helical transmembrane segment at 85 to 103 threads the bilayer; it reads LMRFLSAILATAGMTLLLI. Over 104–134 the chain is Periplasmic; it reads DSEVFTRFHLHLNPIVWELVINPDQNEMARD. A helical transmembrane segment spans residues 135-157; that stretch reads WQLMFISVPVILLIEMLFATWSW. Residues 158–168 are Cytoplasmic-facing; that stretch reads QKLRSLTRRRH. Residues 169–191 form a helical membrane-spanning segment; sequence FARPLAAFFFVSFIASHLIYIWA. Residues 192-586 are Periplasmic-facing; it reads DANFYRPITM…LTEEKRFIAN (395 aa).

The protein to H.influenzae HI_0842.

Its subcellular location is the cell inner membrane. The polypeptide is Inner membrane protein YejM (yejM) (Salmonella typhi).